The sequence spans 253 residues: MLTKRIIPCLDVKGGRVVKGVQFLELRDAGDPVEIAEAYDRQGADELTFLDITASSDERNIIIDVVRRTAERVFMPLTVGGGVRIVDDIRNLLNAGADKVSINTAAVHRPEFVREAAERFGSQCTVVAIDARQVPGENRWEVYTHGGRNPTGIDAVEWARRMEEYGAGEILLTSMDRDGTKDGYDISLTRAIVDAVSIPVIASGGVGNLEHLHDGFVKAGASACLAASIFHYKEYTIGEAKEYLRGRGVPVRL.

Active-site residues include Asp11 and Asp130.

Belongs to the HisA/HisF family. In terms of assembly, heterodimer of HisH and HisF.

Its subcellular location is the cytoplasm. It catalyses the reaction 5-[(5-phospho-1-deoxy-D-ribulos-1-ylimino)methylamino]-1-(5-phospho-beta-D-ribosyl)imidazole-4-carboxamide + L-glutamine = D-erythro-1-(imidazol-4-yl)glycerol 3-phosphate + 5-amino-1-(5-phospho-beta-D-ribosyl)imidazole-4-carboxamide + L-glutamate + H(+). It functions in the pathway amino-acid biosynthesis; L-histidine biosynthesis; L-histidine from 5-phospho-alpha-D-ribose 1-diphosphate: step 5/9. IGPS catalyzes the conversion of PRFAR and glutamine to IGP, AICAR and glutamate. The HisF subunit catalyzes the cyclization activity that produces IGP and AICAR from PRFAR using the ammonia provided by the HisH subunit. In Geobacter metallireducens (strain ATCC 53774 / DSM 7210 / GS-15), this protein is Imidazole glycerol phosphate synthase subunit HisF.